The sequence spans 410 residues: Chitinase-3-like protein 1 (410 aa).

The signal sequence occupies residues 1–48; the sequence is MGVKAAQTGIWASQGQSIRVVGFQAQTAHRAICLLGFVVLVLLQCCSA. Residues 49-410 form the GH18 domain; the sequence is YKLVCYYTSW…NAIKDALAAT (362 aa). An intrachain disulfide couples cysteine 53 to cysteine 78. Residue asparagine 87 is glycosylated (N-linked (GlcNAc...) asparagine). Chitin contacts are provided by residues 97–98, 124–127, tyrosine 168, 231–234, and arginine 290; these read EW, GGWN, and MTYD. Cysteine 327 and cysteine 391 are disulfide-bonded. Positions 351 to 365 are important for AKT1 activation and IL8 production; sequence QWVGYDDQESVKSKV. Tryptophan 379 serves as a coordination point for chitin.

This sequence belongs to the glycosyl hydrolase 18 family. In terms of assembly, monomer.

Its subcellular location is the secreted. The protein resides in the extracellular space. The protein localises to the cytoplasm. It localises to the perinuclear region. It is found in the endoplasmic reticulum. In terms of biological role, carbohydrate-binding lectin with a preference for chitin. Has no chitinase activity. May play a role in tissue remodeling and in the capacity of cells to respond to and cope with changes in their environment. Plays a role in T-helper cell type 2 (Th2) inflammatory response and IL-13-induced inflammation, regulating allergen sensitization, inflammatory cell apoptosis, dendritic cell accumulation and M2 macrophage differentiation. Facilitates invasion of pathogenic enteric bacteria into colonic mucosa and lymphoid organs. Mediates activation of AKT1 signaling pathway and subsequent IL8 production in colonic epithelial cells. Regulates antibacterial responses in lung by contributing to macrophage bacterial killing, controlling bacterial dissemination and augmenting host tolerance. Also regulates hyperoxia-induced injury, inflammation and epithelial apoptosis in lung. The sequence is that of Chitinase-3-like protein 1 (CHI3L1) from Pongo abelii (Sumatran orangutan).